A 406-amino-acid polypeptide reads, in one-letter code: Tryptophan synthase beta chain (406 aa).

K99 is subject to N6-(pyridoxal phosphate)lysine.

Belongs to the TrpB family. As to quaternary structure, tetramer of two alpha and two beta chains. Pyridoxal 5'-phosphate serves as cofactor.

It catalyses the reaction (1S,2R)-1-C-(indol-3-yl)glycerol 3-phosphate + L-serine = D-glyceraldehyde 3-phosphate + L-tryptophan + H2O. The protein operates within amino-acid biosynthesis; L-tryptophan biosynthesis; L-tryptophan from chorismate: step 5/5. Its function is as follows. The beta subunit is responsible for the synthesis of L-tryptophan from indole and L-serine. This is Tryptophan synthase beta chain from Brucella anthropi (strain ATCC 49188 / DSM 6882 / CCUG 24695 / JCM 21032 / LMG 3331 / NBRC 15819 / NCTC 12168 / Alc 37) (Ochrobactrum anthropi).